Reading from the N-terminus, the 457-residue chain is Multidrug resistance protein MdtK (457 aa).

12 helical membrane passes run 11 to 31, 46 to 66, 93 to 113, 127 to 147, 160 to 180, 188 to 208, 243 to 263, 283 to 301, 316 to 336, 357 to 377, 387 to 407, and 418 to 438; these read LLAL…MGVV, AVAV…GLLL, WLAL…DHVI, AVGF…FQVL, GMVI…IFIY, LGGV…FLMM, LPVA…ALLV, LMFM…RVGF, YTSM…TIVF, LMLL…GSGV, IFFI…YLLG, and PAGF…LMVL.

It belongs to the multi antimicrobial extrusion (MATE) (TC 2.A.66.1) family. MdtK subfamily.

It is found in the cell inner membrane. Multidrug efflux pump that functions probably as a Na(+)/drug antiporter. The chain is Multidrug resistance protein MdtK from Yersinia pseudotuberculosis serotype O:1b (strain IP 31758).